The primary structure comprises 2128 residues: MTSATEFENVGNQPPFSRINARWDAPDDELDNDNSSARLFERSRIKALADEREVVQKKTFTKWVNSHLARVSCRISDLYKDLRDGRMLIKLLEVLSGEMLPRPTKGKMRIHCLENVDKALQFLKEQRVHLENMGSHDIVDGNHRLVLGLIWTIILRFQIQDIVVQTQEGREQRSAKDALLLWCQMKTAGYPHVNVTNFTSSWKDGLAFNALIHKHRPDLIDFDKLKDSNARHNLEHAFDVAERQLGIIPLLDPEDVFTENPDEKSIITYVVAFYHYFSKMKVLAVEGKRVGKVIDHAIETEKMIEKYSGLASDLLTWIEQTISVLNSRKFANSLSGVQQQLQAFSTYRTVEKPPKFQEKGNLEVLLFTIQSRMRANNQKVYTPHDGKLVSDINRAWESLEEAEYQRELALRSELIRQEFDRKAAMRETWLNENQRLVTQDNFGYDLAAVEAAKKKHEAIETDTAAYEERVKALEDLAQELEKENYHDQKRIIARKDNILRLWSYLQELLRSRRQRLEATLALQKLFQDMLHSIDWMDEIKAHILSAEFGKHLLEVEDLLQKHKLMEADIAIQGDKVKAITAATLQFAEGKGYQPCDPQVIQDRVSHLEQCFSELSNMAAGRKAQLEQSKRLWKFFWEMDEAESWIKEKEQIYSSLDYGKDLTSVLILQRKHKAFEDELRGLDAHLKQIFQEADDMVAQKQFGHPQIETRVKEVSAQWDHLKELAAFRKKDLQDAENFFQFQGDADDLKAWLQDAHRLLSGEDVGQDEGATRALGKKHKEFLEELEESRGVMEHLEHQAQGFPEEFRDSPDVTNRLQALRKLYQQVLTQAELRGHKLQEALDLYTVFGESDACELWMTEKGKWLDQMDIPNTLEDLEVVQHRFDILDQEMKTLMAQIDGVNLAANNLVESGHPRSGEVKQYQDRLNKRWQAFQAVVSEQREAVDSALRVNNYCVDCEETSKWIMDKTKVVESTKDLGQDLAGVIAIQRKLSGLERDVLAIRDRVSALERESQYLMESHPEQKEDIGQRQADVEKLWKGLQDALQGQELSLGEASKLQAFLQDLDDFKAWLSMAQKAVASEDMPESLPEAEQLLQQHAAIKEEIDAHRDDYHRVKASGEKVIEGQTDPDYQLLGQRLEGLDTDWDALRRMWESRGNTLTQCLGFQEFQKDAKQAEAILSNQEYTLAHLEPPDSLAAAEAGIRKFEDFLVSMENNRDKILSPVDSGNKLVAEGNLYSNKIMEKVQLIEDRHKKNNEKAQEATVLLKDNLELQNFLQNCKELTLWINDKLLTSPDVSYDEARNLHNKWMKHQAFMAELASHQGWLENIDAEGRQLMAEKPQFKDVVSERLEALHKLWEELQSTAKAKAEQLSAARSSDLRLQTHADLNKWIGAMEDQLRSDDLGKDLTTVNRMLAKLKRVEEQVNLRKEELEELFADAPSLGAEAGDTDMSIEKRFLDLLEPLGRRKKQLELSKAKLQISRDLEDETLWVEERLPLAQSADYGTNLQTVQLFMKKNQTLQNEILGHAPRVEDVLRRGQELVKAAEIDCQDIEERLGHLQSSWDTLREAAAGRLQRLRDAHEAQQYYLDAGEAEAWISEQELYVFSDEPPKDEEGAIVMLKRHLRQQRTVEEYGRNIKQLAGRAQSLLSAGHPEGEQIIRLQGQVDKQYAGLKDMAEERRRRLENMYHLFQLKREADDLEQWITEKEMVASSQEMGQDFDHVTMLRDKFRDFARETGAIGQERVDNVTIIERLIDAGHSEAATIAEWKDGLNDMWADLLELIDTRMQLLAASYDLHRYFYTGTEILGLIDEKHRELPEDVGLDASTAESFHRVHTAFERELHLLGVQVQQFQDVATRLQTAYAGEKADAIQSKEQEVSAAWQALLDACAGRRAQLVDTADKFRFFSMVRDLLSWMESIIRQIETQERPRDVSSVELLLKYHQGIKAEINTRAKNFSTCLELGESLLQRQHQASDEIREKLQQVISRRQEMNDKWEARSDRLHMLLEVCQFSRDASVAEAWLIAQEPYLASRDFGHTVDSVEKLIKRHEAFEKSTASWAERFAALEKPTTLELKERQTPERPTEEPGPQEEEGETAGEAPQVHHAATERTSPVSFMSRLSSSWESLLPEPAHPF.

The span at Met1 to Pro15 shows a compositional bias: polar residues. Positions Met1–Leu30 are disordered. The tract at residues Thr2–His275 is actin-binding. At Ser36 the chain carries Phosphoserine. 2 consecutive Calponin-homology (CH) domains span residues Val54–Gln158 and Arg173–Ser278. Position 104 is a phosphothreonine (Thr104). Spectrin repeat units follow at residues Met303 to Arg411, Arg416 to Glu517, Ala521 to Gln627, Arg630 to Asp733, Asn736 to Glu838, Val845 to Val942, Asn950 to Gly1050, Lys1054 to Thr1157, Phe1162 to Lys1250, Glu1267 to Ser1368, Ala1381 to Leu1455, Leu1473 to Asp1574, His1576 to Asn1680, Tyr1682 to Leu1784, Asp1789 to Leu1890, Phe1897 to His1997, and Gln2004 to Thr2064. Ser1289 carries the post-translational modification Phosphoserine. Ser2034 bears the Phosphoserine mark. Positions Pro2062 to Ser2108 are disordered. Phosphothreonine occurs at positions 2064, 2072, and 2101. A compositionally biased stretch (basic and acidic residues) spans Glu2066–Glu2078. Phosphoserine is present on residues Ser2105, Ser2108, Ser2114, Ser2116, and Ser2119.

The protein belongs to the spectrin family. In terms of assembly, composed of nonhomologous chains, alpha and beta, which aggregate to form dimers, tetramers, and higher polymers. Interacts with BCAM.

It localises to the cytoplasm. It is found in the cytoskeleton. The protein resides in the cell cortex. In terms of biological role, spectrin is the major constituent of the cytoskeletal network underlying the erythrocyte plasma membrane. It associates with band 4.1 and actin to form the cytoskeletal superstructure of the erythrocyte plasma membrane. This is Spectrin beta chain, erythrocytic (Sptb) from Mus musculus (Mouse).